We begin with the raw amino-acid sequence, 348 residues long: Phosphoribosylformylglycinamidine cyclo-ligase (348 aa).

The protein belongs to the AIR synthase family.

The protein localises to the cytoplasm. It catalyses the reaction 2-formamido-N(1)-(5-O-phospho-beta-D-ribosyl)acetamidine + ATP = 5-amino-1-(5-phospho-beta-D-ribosyl)imidazole + ADP + phosphate + H(+). The protein operates within purine metabolism; IMP biosynthesis via de novo pathway; 5-amino-1-(5-phospho-D-ribosyl)imidazole from N(2)-formyl-N(1)-(5-phospho-D-ribosyl)glycinamide: step 2/2. The chain is Phosphoribosylformylglycinamidine cyclo-ligase from Sorangium cellulosum (strain So ce56) (Polyangium cellulosum (strain So ce56)).